The primary structure comprises 245 residues: Thiopurine S-methyltransferase (245 aa).

Serine 14 bears the Phosphoserine mark. An S-adenosyl-L-methionine-binding site is contributed by 29–40 (WQDKWVNGKTAF). Substrate is bound at residue phenylalanine 40. Residue lysine 58 is modified to N6-acetyllysine. Residues leucine 69, glutamate 90, 134-135 (SI), and arginine 152 each bind S-adenosyl-L-methionine.

Belongs to the class I-like SAM-binding methyltransferase superfamily. TPMT family. Monomer.

It localises to the cytoplasm. It carries out the reaction S-adenosyl-L-methionine + a thiopurine = S-adenosyl-L-homocysteine + a thiopurine S-methylether.. This is Thiopurine S-methyltransferase (TPMT) from Gorilla gorilla gorilla (Western lowland gorilla).